The following is a 255-amino-acid chain: Pyridoxine 5'-phosphate synthase (255 aa).

3-amino-2-oxopropyl phosphate contacts are provided by Asn8 and Arg19. The Proton acceptor role is filled by His44. 1-deoxy-D-xylulose 5-phosphate contacts are provided by Arg46 and His51. Catalysis depends on Glu74, which acts as the Proton acceptor. Thr111 contributes to the 1-deoxy-D-xylulose 5-phosphate binding site. The Proton donor role is filled by His202. 3-amino-2-oxopropyl phosphate contacts are provided by residues Asp203 and 225–226 (GH).

This sequence belongs to the PNP synthase family. As to quaternary structure, homooctamer; tetramer of dimers.

Its subcellular location is the cytoplasm. It catalyses the reaction 3-amino-2-oxopropyl phosphate + 1-deoxy-D-xylulose 5-phosphate = pyridoxine 5'-phosphate + phosphate + 2 H2O + H(+). It participates in cofactor biosynthesis; pyridoxine 5'-phosphate biosynthesis; pyridoxine 5'-phosphate from D-erythrose 4-phosphate: step 5/5. Catalyzes the complicated ring closure reaction between the two acyclic compounds 1-deoxy-D-xylulose-5-phosphate (DXP) and 3-amino-2-oxopropyl phosphate (1-amino-acetone-3-phosphate or AAP) to form pyridoxine 5'-phosphate (PNP) and inorganic phosphate. In Xanthomonas oryzae pv. oryzae (strain PXO99A), this protein is Pyridoxine 5'-phosphate synthase.